The primary structure comprises 487 residues: ATP synthase subunit beta (487 aa).

171–178 (GGAGVGKT) provides a ligand contact to ATP.

The protein belongs to the ATPase alpha/beta chains family. In terms of assembly, F-type ATPases have 2 components, CF(1) - the catalytic core - and CF(0) - the membrane proton channel. CF(1) has five subunits: alpha(3), beta(3), gamma(1), delta(1), epsilon(1). CF(0) has three main subunits: a(1), b(2) and c(9-12). The alpha and beta chains form an alternating ring which encloses part of the gamma chain. CF(1) is attached to CF(0) by a central stalk formed by the gamma and epsilon chains, while a peripheral stalk is formed by the delta and b chains.

The protein resides in the cell membrane. It catalyses the reaction ATP + H2O + 4 H(+)(in) = ADP + phosphate + 5 H(+)(out). Functionally, produces ATP from ADP in the presence of a proton gradient across the membrane. The catalytic sites are hosted primarily by the beta subunits. The chain is ATP synthase subunit beta from Leifsonia xyli subsp. xyli (strain CTCB07).